The sequence spans 71 residues: Cytotoxic linear peptide IsCT2 (71 aa).

The signal sequence occupies residues 1 to 23; that stretch reads MKTQFAILLVALVLFQMFAQSEA. Phenylalanine amide is present on Phe36. Residues 40–71 constitute a propeptide that is removed on maturation; sequence ALNNDLDLDGLDELFDGEISQADVDFLKELMR.

The protein belongs to the non-disulfide-bridged peptide (NDBP) superfamily. Short antimicrobial peptide (group 4) family. IsCT2F is an enzymatic proteolytic cleavage product of IsCT2 by the proteases present in the venom. In terms of tissue distribution, expressed by the venom gland.

It localises to the secreted. It is found in the target cell membrane. IsCT2 shows weak hemolytic activity and antibacterial activity against both Gram-positive and Gram-negative bacteria probably by forming pores in the cell membrane. IsCT2 adopts an amphipathic alpha-helical structure. Its function is as follows. IsCT2f shows neither hemolytic, nor antibacterial activities, surely due to the fact that it cannot apply amphipathic alpha-helical structure. The chain is Cytotoxic linear peptide IsCT2 from Opisthacanthus madagascariensis (Scorpion).